We begin with the raw amino-acid sequence, 451 residues long: Proline--tRNA ligase (451 aa).

The protein belongs to the class-II aminoacyl-tRNA synthetase family. ProS type 2 subfamily. In terms of assembly, homodimer.

The protein localises to the cytoplasm. It catalyses the reaction tRNA(Pro) + L-proline + ATP = L-prolyl-tRNA(Pro) + AMP + diphosphate. In terms of biological role, catalyzes the attachment of proline to tRNA(Pro) in a two-step reaction: proline is first activated by ATP to form Pro-AMP and then transferred to the acceptor end of tRNA(Pro). The protein is Proline--tRNA ligase of Roseobacter denitrificans (strain ATCC 33942 / OCh 114) (Erythrobacter sp. (strain OCh 114)).